A 439-amino-acid chain; its full sequence is UDP-N-acetylmuramoylalanine--D-glutamate ligase (439 aa).

116–122 (GSNGKTT) is an ATP binding site.

This sequence belongs to the MurCDEF family.

Its subcellular location is the cytoplasm. It carries out the reaction UDP-N-acetyl-alpha-D-muramoyl-L-alanine + D-glutamate + ATP = UDP-N-acetyl-alpha-D-muramoyl-L-alanyl-D-glutamate + ADP + phosphate + H(+). Its pathway is cell wall biogenesis; peptidoglycan biosynthesis. Its function is as follows. Cell wall formation. Catalyzes the addition of glutamate to the nucleotide precursor UDP-N-acetylmuramoyl-L-alanine (UMA). This chain is UDP-N-acetylmuramoylalanine--D-glutamate ligase, found in Shewanella oneidensis (strain ATCC 700550 / JCM 31522 / CIP 106686 / LMG 19005 / NCIMB 14063 / MR-1).